The chain runs to 1204 residues: Erythroid differentiation-related factor 1 (1204 aa).

Disordered regions lie at residues 1 to 30 (MGDA…QAES), 220 to 264 (QPVS…ASSQ), 483 to 527 (PKKE…SDDS), and 586 to 613 (KKES…RGGP). Low complexity-rich tracts occupy residues 9–30 (AEGP…QAES), 223–241 (SSTT…NDSE), and 253–263 (SSVSEDPSASS). Positions 496–513 (NSDESYSEEEEEMPDSDE) are enriched in acidic residues. TPR repeat units lie at residues 693–726 (CCLC…QNAN) and 920–953 (DIHP…LSRK).

The protein localises to the nucleus. Its function is as follows. Transcription factor involved in erythroid differentiation. Involved in transcriptional activation of the globin gene. This Pongo abelii (Sumatran orangutan) protein is Erythroid differentiation-related factor 1 (EDRF1).